We begin with the raw amino-acid sequence, 311 residues long: Methionyl-tRNA formyltransferase (311 aa).

112-115 (SLLP) is a (6S)-5,6,7,8-tetrahydrofolate binding site.

It belongs to the Fmt family.

It carries out the reaction L-methionyl-tRNA(fMet) + (6R)-10-formyltetrahydrofolate = N-formyl-L-methionyl-tRNA(fMet) + (6S)-5,6,7,8-tetrahydrofolate + H(+). Attaches a formyl group to the free amino group of methionyl-tRNA(fMet). The formyl group appears to play a dual role in the initiator identity of N-formylmethionyl-tRNA by promoting its recognition by IF2 and preventing the misappropriation of this tRNA by the elongation apparatus. The sequence is that of Methionyl-tRNA formyltransferase from Bartonella henselae (strain ATCC 49882 / DSM 28221 / CCUG 30454 / Houston 1) (Rochalimaea henselae).